The sequence spans 440 residues: GTPase Obg (440 aa).

The Obg domain maps to 5–163 (STFVDQTKIE…RTLRLELKVL (159 aa)). Residues 164-338 (ADVGLVGFPS…LMSRAADLVS (175 aa)) enclose the OBG-type G domain. GTP contacts are provided by residues 170 to 177 (GFPSVGKS), 195 to 199 (FTTLK), 217 to 220 (DLPG), 288 to 291 (SQMD), and 319 to 321 (SSV). S177 and T197 together coordinate Mg(2+). In terms of domain architecture, OCT spans 362–440 (YHRPEKMEFT…IGDFSFEFVQ (79 aa)).

Belongs to the TRAFAC class OBG-HflX-like GTPase superfamily. OBG GTPase family. In terms of assembly, monomer. Mg(2+) is required as a cofactor.

The protein resides in the cytoplasm. Its function is as follows. An essential GTPase which binds GTP, GDP and possibly (p)ppGpp with moderate affinity, with high nucleotide exchange rates and a fairly low GTP hydrolysis rate. Plays a role in control of the cell cycle, stress response, ribosome biogenesis and in those bacteria that undergo differentiation, in morphogenesis control. The protein is GTPase Obg of Lactobacillus delbrueckii subsp. bulgaricus (strain ATCC 11842 / DSM 20081 / BCRC 10696 / JCM 1002 / NBRC 13953 / NCIMB 11778 / NCTC 12712 / WDCM 00102 / Lb 14).